The following is a 551-amino-acid chain: E3 ubiquitin-protein ligase HEL1 (551 aa).

The tract at residues 175–388 is TRIAD supradomain; it reads NDFTCIICCD…KNFFQCTMYK (214 aa). The Zn(2+) site is built by Cys-179, Cys-182, Cys-200, Cys-203, Cys-301, Cys-304, His-309, Cys-314, Cys-341, and Cys-344. An RING-type 1 zinc finger spans residues 179–225; the sequence is CIICCDKKDTETFALECGHEYCINCYRHYIKDKLHEGNIITCMDCSL. Residues 242–314 form an IBR-type zinc finger; that stretch reads SKLMDSSIKS…GFEVHSPADC (73 aa). An RING-type 2; atypical zinc finger spans residues 341–370; sequence CPKCSVNIEKNGGCNHMVCSSCKYEFCWIC. Cys-354 is an active-site residue. 6 residues coordinate Zn(2+): Cys-359, Cys-362, Cys-367, Cys-370, His-377, and Cys-384.

Belongs to the RBR family. As to quaternary structure, interacts with the E2 ubiquitin-conjugating enzyme UBC4 and histones H3 and H4.

The catalysed reaction is [E2 ubiquitin-conjugating enzyme]-S-ubiquitinyl-L-cysteine + [acceptor protein]-L-lysine = [E2 ubiquitin-conjugating enzyme]-L-cysteine + [acceptor protein]-N(6)-ubiquitinyl-L-lysine.. The protein operates within protein modification; protein ubiquitination. In terms of biological role, probable ubiquitin-protein ligase involved in the degradation-related ubiquitination of histones. Contributes to the post-translational regulation of histone protein levels by polyubiquitination of excess histones for subsequent degradation. The chain is E3 ubiquitin-protein ligase HEL1 from Saccharomyces cerevisiae (strain ATCC 204508 / S288c) (Baker's yeast).